Consider the following 525-residue polypeptide: MALDIHAHRILILDFGSQYTQLIARRVREIGVYCELHPFDMDDEAIREFAPKGVILAGGPESVHEANSPRCPQAVFDLGVPVFGICYGMQTMAEQLGGKVEGSELREFGYARVDVVGKSRLLDGIEDHIDADGLFGLDVWMSHGDKVTKMPEDFHILASTPSCPIAGMFSDERRYYGVQFHPEVTHTKQGGRILSRFILDICECEALWTPSKIAEDAIAQVRAQVGTDNVLLGLSGGVDSSVVAALLHKAIGDQLTCVFVDNGLLRLHEGEQVMAMFAENMGVKVIRANAEDQFLNNLAGESDPEKKRKIIGRTFIDVFDAQSNKLDNIKYLAQGTIYPDVIESAGAKSGKAHVIKSHHNVGGLPEEMNLKLVEPLRELFKDEVRRLGLELGLPYDMVYRHPFPGPGLGVRILGEVKKEYADLLRRADHIFIEELRKADWYHKVSQAFVVFQPVKSVGVVGDGRRYAWVVALRAVETIDFMTARWAHLPYELLETVSGRIINEIEGISRVTYDVSSKPPATIEWE.

The Glutamine amidotransferase type-1 domain maps to 9–207 (RILILDFGSQ…ILDICECEAL (199 aa)). Cysteine 86 acts as the Nucleophile in catalysis. Residues histidine 181 and glutamate 183 contribute to the active site. The 193-residue stretch at 208-400 (WTPSKIAEDA…LGLPYDMVYR (193 aa)) folds into the GMPS ATP-PPase domain. 235–241 (SGGVDSS) lines the ATP pocket.

In terms of assembly, homodimer.

It catalyses the reaction XMP + L-glutamine + ATP + H2O = GMP + L-glutamate + AMP + diphosphate + 2 H(+). Its pathway is purine metabolism; GMP biosynthesis; GMP from XMP (L-Gln route): step 1/1. Its function is as follows. Catalyzes the synthesis of GMP from XMP. This is GMP synthase [glutamine-hydrolyzing] from Pseudomonas fluorescens (strain SBW25).